The following is a 215-amino-acid chain: Ribosomal RNA small subunit methyltransferase G (215 aa).

S-adenosyl-L-methionine is bound by residues glycine 78, leucine 83, 128-129, and arginine 146; that span reads AE.

It belongs to the methyltransferase superfamily. RNA methyltransferase RsmG family.

The protein localises to the cytoplasm. The catalysed reaction is guanosine(527) in 16S rRNA + S-adenosyl-L-methionine = N(7)-methylguanosine(527) in 16S rRNA + S-adenosyl-L-homocysteine. Functionally, specifically methylates the N7 position of guanine in position 527 of 16S rRNA. The chain is Ribosomal RNA small subunit methyltransferase G from Anaeromyxobacter dehalogenans (strain 2CP-C).